The chain runs to 217 residues: Protein dao-4 (217 aa).

The N-terminal stretch at 1 to 21 (MKIALYSILLITVCYLSSTDA) is a signal peptide.

It is found in the nucleus. The protein resides in the secreted. Its function is as follows. Probably acts downstream of the Wnt signaling pathway. The protein is Protein dao-4 of Caenorhabditis elegans.